Consider the following 525-residue polypeptide: GMP synthase [glutamine-hydrolyzing] (525 aa).

The Glutamine amidotransferase type-1 domain maps to 9 to 207 (RILILDFGSQ…VRDICQCEAL (199 aa)). Cys-86 serves as the catalytic Nucleophile. Residues His-181 and Glu-183 contribute to the active site. The 193-residue stretch at 208-400 (WTPAKIIDDA…LGLPYDMLYR (193 aa)) folds into the GMPS ATP-PPase domain. Position 235-241 (235-241 (SGGVDSS)) interacts with ATP.

Homodimer.

It catalyses the reaction XMP + L-glutamine + ATP + H2O = GMP + L-glutamate + AMP + diphosphate + 2 H(+). It participates in purine metabolism; GMP biosynthesis; GMP from XMP (L-Gln route): step 1/1. Its function is as follows. Catalyzes the synthesis of GMP from XMP. The polypeptide is GMP synthase [glutamine-hydrolyzing] (Escherichia coli O8 (strain IAI1)).